The primary structure comprises 279 residues: Large ribosomal subunit protein uL2 (279 aa).

Positions N202–G279 are disordered. Residues G209–N220 show a composition bias toward basic residues.

It belongs to the universal ribosomal protein uL2 family. Part of the 50S ribosomal subunit. Forms a bridge to the 30S subunit in the 70S ribosome.

Functionally, one of the primary rRNA binding proteins. Required for association of the 30S and 50S subunits to form the 70S ribosome, for tRNA binding and peptide bond formation. It has been suggested to have peptidyltransferase activity; this is somewhat controversial. Makes several contacts with the 16S rRNA in the 70S ribosome. This is Large ribosomal subunit protein uL2 from Methylocella silvestris (strain DSM 15510 / CIP 108128 / LMG 27833 / NCIMB 13906 / BL2).